Here is a 521-residue protein sequence, read N- to C-terminus: uncharacterized protein (521 aa).

A signal peptide spans 1-22; that stretch reads MGFKLKGFGFLTLFASQAFLTA. The N-palmitoyl cysteine moiety is linked to residue cysteine 23. A lipid anchor (S-diacylglycerol cysteine) is attached at cysteine 23.

The protein belongs to the MG067/MG068/MG395 family.

The protein localises to the cell membrane. This is an uncharacterized protein from Mycoplasma pneumoniae (strain ATCC 29342 / M129 / Subtype 1) (Mycoplasmoides pneumoniae).